The chain runs to 407 residues: Imidazolonepropionase (407 aa).

Fe(3+) is bound by residues His-68 and His-70. Positions 68 and 70 each coordinate Zn(2+). Residues Arg-77, Tyr-140, and His-173 each contribute to the 4-imidazolone-5-propanoate site. Residue Tyr-140 coordinates N-formimidoyl-L-glutamate. Residue His-238 participates in Fe(3+) binding. Zn(2+) is bound at residue His-238. Residue Gln-241 coordinates 4-imidazolone-5-propanoate. Residue Asp-313 coordinates Fe(3+). A Zn(2+)-binding site is contributed by Asp-313. Positions 315 and 317 each coordinate N-formimidoyl-L-glutamate. Position 318 (Thr-318) interacts with 4-imidazolone-5-propanoate.

It belongs to the metallo-dependent hydrolases superfamily. HutI family. The cofactor is Zn(2+). It depends on Fe(3+) as a cofactor.

It localises to the cytoplasm. The catalysed reaction is 4-imidazolone-5-propanoate + H2O = N-formimidoyl-L-glutamate. It functions in the pathway amino-acid degradation; L-histidine degradation into L-glutamate; N-formimidoyl-L-glutamate from L-histidine: step 3/3. Functionally, catalyzes the hydrolytic cleavage of the carbon-nitrogen bond in imidazolone-5-propanoate to yield N-formimidoyl-L-glutamate. It is the third step in the universal histidine degradation pathway. The polypeptide is Imidazolonepropionase (Burkholderia pseudomallei (strain 1710b)).